A 461-amino-acid chain; its full sequence is tRNA modification GTPase MnmE (461 aa).

(6S)-5-formyl-5,6,7,8-tetrahydrofolate-binding residues include Arg27, Glu89, and Arg128. The region spanning Gly224–Phe382 is the TrmE-type G domain. Asn234 contributes to the K(+) binding site. GTP contacts are provided by residues Asn234–Ser239, Thr253–Thr259, and Asp278–Gly281. Ser238 contributes to the Mg(2+) binding site. 3 residues coordinate K(+): Thr253, Ile255, and Thr258. Thr259 is a Mg(2+) binding site. A (6S)-5-formyl-5,6,7,8-tetrahydrofolate-binding site is contributed by Lys461.

It belongs to the TRAFAC class TrmE-Era-EngA-EngB-Septin-like GTPase superfamily. TrmE GTPase family. Homodimer. Heterotetramer of two MnmE and two MnmG subunits. The cofactor is K(+).

The protein resides in the cytoplasm. Functionally, exhibits a very high intrinsic GTPase hydrolysis rate. Involved in the addition of a carboxymethylaminomethyl (cmnm) group at the wobble position (U34) of certain tRNAs, forming tRNA-cmnm(5)s(2)U34. The chain is tRNA modification GTPase MnmE from Lactobacillus johnsonii (strain CNCM I-12250 / La1 / NCC 533).